Consider the following 478-residue polypeptide: Solute carrier family 2, facilitated glucose transporter member 8 (478 aa).

Residues 1–20 (MTPEDQEETQPLLRPPGGSA) form a disordered region. The Cytoplasmic portion of the chain corresponds to 1 to 25 (MTPEDQEETQPLLRPPGGSAPRGRR). Low complexity predominate over residues 11-20 (PLLRPPGGSA). The short motif at 12 to 13 (LL) is the Dileucine internalization motif element. A helical membrane pass occupies residues 26 to 46 (VFLAAFAAALGPLSFGFALGY). Residues 47 to 70 (SSPAIPSLRRAAPPAPHLDEDAAS) are Extracellular-facing. Residues 71–91 (WFGAIVTLGAAAGGVLGGWLL) form a helical membrane-spanning segment. At 92 to 97 (DRAGRK) the chain is on the cytoplasmic side. The chain crosses the membrane as a helical span at residues 98 to 118 (LSLVLCALPFVAGFAVITAAQ). Over 119-127 (NLWMLLGGR) the chain is Extracellular. The chain crosses the membrane as a helical span at residues 128 to 148 (LLTGLACGIASLVAPVYISEI). Over 149–158 (AYPEVRGLLG) the chain is Cytoplasmic. A helical membrane pass occupies residues 159–179 (SCVQLMVVTGILLAYLAGWVL). Residue Gln-162 coordinates D-glucose. Residues 180–182 (EWR) are Extracellular-facing. A helical transmembrane segment spans residues 183–203 (WLAVLGCVPPSFMLLLMCFMP). Residues 204-257 (ETPRFLLSQHKHQEAMAAMQFLWGYAQGWEEPPLGAQHQDFHVAQLRRPGVYKP) lie on the Cytoplasmic side of the membrane. Residues 258 to 278 (FIIGISLMAFQQLSGVNAVMF) traverse the membrane as a helical segment. D-glucose is bound by residues 268–269 (QQ) and Asn-274. Topologically, residues 279–293 (YAETIFEEAKFKDSS) are extracellular. Residues 294-314 (LASVVVGVIQVLFTATAALIM) form a helical membrane-spanning segment. At 315 to 320 (DRAGRR) the chain is on the cytoplasmic side. Residues 321-341 (LLLTLSGVVMVFSTSAFGTYF) traverse the membrane as a helical segment. The Extracellular portion of the chain corresponds to 342–368 (KLTEGGPSNSSHVDLPALVSMEAADTN). An N-linked (GlcNAc...) asparagine glycan is attached at Asn-350. A helical membrane pass occupies residues 369–389 (VGLAWLAVGSMCLFIAGFAVG). Topologically, residues 390 to 405 (WGPIPWLLMSEIFPLH) are cytoplasmic. Residue Trp-395 coordinates D-glucose. Residues 406-426 (VKGVATGVCVLTNWFMAFLVT) traverse the membrane as a helical segment. Residues 427–439 (KEFSSLMEVLRPY) lie on the Extracellular side of the membrane. Residues 440–460 (GAFWLASAFCIFGVLFTLACV) traverse the membrane as a helical segment. Over 461–478 (PETKGKTLEQITAHFEGR) the chain is Cytoplasmic.

This sequence belongs to the major facilitator superfamily. Sugar transporter (TC 2.A.1.1) family. Glucose transporter subfamily. Interacts with AP2B1. In terms of tissue distribution, abundantly expressed in testis and more moderately in lung, kidney, spleen, intestine, skeletal muscle, liver and mammary gland.

It localises to the cell membrane. The protein resides in the cytoplasmic vesicle membrane. The enzyme catalyses D-glucose(out) = D-glucose(in). The catalysed reaction is D-fructose(out) = D-fructose(in). It catalyses the reaction L-dehydroascorbate(out) = L-dehydroascorbate(in). It carries out the reaction alpha,alpha-trehalose(in) = alpha,alpha-trehalose(out). Inhibited by cytochalasin B. Insulin-regulated facilitative hexose transporter that mediates the transport of glucose and fructose. Facilitates hepatic influx of dietary trehalose, which in turn inhibits glucose and fructose influx triggering a starvation signal and hepatic autophagy through activation of AMPK and ULK1. Also able to mediate the transport of dehydroascorbate. The polypeptide is Solute carrier family 2, facilitated glucose transporter member 8 (Bos taurus (Bovine)).